Reading from the N-terminus, the 297-residue chain is Lipoyl synthase (297 aa).

Residues C40, C45, C51, C67, C71, C74, and S280 each contribute to the [4Fe-4S] cluster site. The 217-residue stretch at A53–S269 folds into the Radical SAM core domain.

This sequence belongs to the radical SAM superfamily. Lipoyl synthase family. Requires [4Fe-4S] cluster as cofactor.

It localises to the cytoplasm. It catalyses the reaction [[Fe-S] cluster scaffold protein carrying a second [4Fe-4S](2+) cluster] + N(6)-octanoyl-L-lysyl-[protein] + 2 oxidized [2Fe-2S]-[ferredoxin] + 2 S-adenosyl-L-methionine + 4 H(+) = [[Fe-S] cluster scaffold protein] + N(6)-[(R)-dihydrolipoyl]-L-lysyl-[protein] + 4 Fe(3+) + 2 hydrogen sulfide + 2 5'-deoxyadenosine + 2 L-methionine + 2 reduced [2Fe-2S]-[ferredoxin]. Its pathway is protein modification; protein lipoylation via endogenous pathway; protein N(6)-(lipoyl)lysine from octanoyl-[acyl-carrier-protein]. In terms of biological role, catalyzes the radical-mediated insertion of two sulfur atoms into the C-6 and C-8 positions of the octanoyl moiety bound to the lipoyl domains of lipoate-dependent enzymes, thereby converting the octanoylated domains into lipoylated derivatives. The sequence is that of Lipoyl synthase from Bacillus cereus (strain ATCC 14579 / DSM 31 / CCUG 7414 / JCM 2152 / NBRC 15305 / NCIMB 9373 / NCTC 2599 / NRRL B-3711).